The primary structure comprises 195 residues: ATP-dependent Clp protease proteolytic subunit (195 aa).

The active-site Nucleophile is serine 101. The active site involves histidine 126.

The protein belongs to the peptidase S14 family. In terms of assembly, component of the chloroplastic Clp protease core complex.

It localises to the plastid. Its subcellular location is the chloroplast stroma. It catalyses the reaction Hydrolysis of proteins to small peptides in the presence of ATP and magnesium. alpha-casein is the usual test substrate. In the absence of ATP, only oligopeptides shorter than five residues are hydrolyzed (such as succinyl-Leu-Tyr-|-NHMec, and Leu-Tyr-Leu-|-Tyr-Trp, in which cleavage of the -Tyr-|-Leu- and -Tyr-|-Trp bonds also occurs).. Cleaves peptides in various proteins in a process that requires ATP hydrolysis. Has a chymotrypsin-like activity. Plays a major role in the degradation of misfolded proteins. In Cucumis sativus (Cucumber), this protein is ATP-dependent Clp protease proteolytic subunit.